Here is a 559-residue protein sequence, read N- to C-terminus: Berberine bridge enzyme-like A (559 aa).

Positions 1-21 (MFPLIILISFSLASLSETATG) are cleaved as a signal peptide. N-linked (GlcNAc...) asparagine glycans are attached at residues N25 and N37. A disulfide bridge connects residues C29 and C86. The FAD-binding PCMH-type domain occupies 64–240 (FMPKPTFIIL…YAWKIRLLKV (177 aa)). H101 carries the pros-8alpha-FAD histidine modification. Residues N321, N355, and N494 are each glycosylated (N-linked (GlcNAc...) asparagine).

It belongs to the oxygen-dependent FAD-linked oxidoreductase family. The cofactor is FAD. As to expression, mostly expressed in roots.

The protein localises to the vacuole. The protein operates within alkaloid biosynthesis; nicotine biosynthesis. Functionally, involved in the biosynthesis of pyridine alkaloid natural products, leading mainly to the production of anabasine, anatabine, nicotine and nornicotine, effective deterrents against herbivores with antiparasitic and pesticide properties (neurotoxins); nornicotine serves as the precursor in the synthesis of the carcinogen compound N'-nitrosonornicotine (NNN). Catalyzes a late oxidation step subsequent to the pyridine ring condensation reaction in the biosynthesis of alkaloids. This chain is Berberine bridge enzyme-like A, found in Nicotiana tabacum (Common tobacco).